The primary structure comprises 308 residues: GTP cyclohydrolase FolE2 (308 aa).

Belongs to the GTP cyclohydrolase IV family.

The enzyme catalyses GTP + H2O = 7,8-dihydroneopterin 3'-triphosphate + formate + H(+). Its pathway is cofactor biosynthesis; 7,8-dihydroneopterin triphosphate biosynthesis; 7,8-dihydroneopterin triphosphate from GTP: step 1/1. In terms of biological role, converts GTP to 7,8-dihydroneopterin triphosphate. In Idiomarina loihiensis (strain ATCC BAA-735 / DSM 15497 / L2-TR), this protein is GTP cyclohydrolase FolE2.